The following is a 262-amino-acid chain: Trypsin eta (262 aa).

A signal peptide spans 1 to 22; that stretch reads MNKVILRILAVLFLLGIYAVSA. Residues 23 to 27 constitute a propeptide, activation peptide; the sequence is QSDGR. The 232-residue stretch at 28–259 folds into the Peptidase S1 domain; it reads IVGGADTSSY…YKDWIAKQRT (232 aa). Cys59 and Cys75 are disulfide-bonded. Active-site charge relay system residues include His74 and Asp120. 2 disulfides stabilise this stretch: Cys185/Cys200 and Cys211/Cys235. The active-site Charge relay system is the Ser215.

Belongs to the peptidase S1 family.

It localises to the secreted. The protein localises to the extracellular space. It catalyses the reaction Preferential cleavage: Arg-|-Xaa, Lys-|-Xaa.. In Drosophila melanogaster (Fruit fly), this protein is Trypsin eta (etaTry).